The following is a 569-amino-acid chain: Proline--tRNA ligase (569 aa).

It belongs to the class-II aminoacyl-tRNA synthetase family. ProS type 1 subfamily. Homodimer.

The protein localises to the cytoplasm. It catalyses the reaction tRNA(Pro) + L-proline + ATP = L-prolyl-tRNA(Pro) + AMP + diphosphate. Catalyzes the attachment of proline to tRNA(Pro) in a two-step reaction: proline is first activated by ATP to form Pro-AMP and then transferred to the acceptor end of tRNA(Pro). As ProRS can inadvertently accommodate and process non-cognate amino acids such as alanine and cysteine, to avoid such errors it has two additional distinct editing activities against alanine. One activity is designated as 'pretransfer' editing and involves the tRNA(Pro)-independent hydrolysis of activated Ala-AMP. The other activity is designated 'posttransfer' editing and involves deacylation of mischarged Ala-tRNA(Pro). The misacylated Cys-tRNA(Pro) is not edited by ProRS. This is Proline--tRNA ligase from Campylobacter jejuni (strain RM1221).